The chain runs to 614 residues: Zinc finger protein 276 (614 aa).

The segment at 1–46 (MKRDRLGRFLSPGIARQRGGSGGGCGSGRTRGRPSRSGGTSADGAA) is disordered. Over residues 19 to 29 (GGSGGGCGSGR) the composition is skewed to gly residues. The region spanning 78 to 164 (GHCRLCHGKF…LQRVNVSPAG (87 aa)) is the ZAD domain. Cysteine 80, cysteine 83, cysteine 137, and cysteine 140 together coordinate Zn(2+). Positions 271–422 (RLAQNSESNP…PGPKPGWKKK (152 aa)) are disordered. Composition is skewed to polar residues over residues 272–282 (LAQNSESNPTG) and 291–302 (RETQVGSETKTL). Residues 357-369 (SDLSEGDFLSEDE) are compositionally biased toward acidic residues. Residues 386 to 408 (YPEKKVSGKKSEGREAKRPEEPK) are compositionally biased toward basic and acidic residues. A compositionally biased stretch (basic residues) spans 409–422 (IRKKPGPKPGWKKK). 5 C2H2-type zinc fingers span residues 434 to 458 (YKCPYQGCTAVYRGADGMKKHIKEH), 465 to 490 (RPCPHPGCNKVFMIDRYLQRHVKLIH), 496 to 518 (YICDECGQTFKQRKHLLVHQMRH), 524 to 546 (LQCEVCGFQCRQRASLKYHMTKH), and 554 to 577 (FACDQCGRRFEKAHNLNVHMSMVH). A disordered region spans residues 588-614 (PLEAEPPPGPLSPSGTMEGQAVKPEPT).

As to expression, found in all the examined tissues, with highest levels in kidney, liver, lung, and spleen.

It is found in the nucleus. It localises to the chromosome. The protein localises to the centromere. The protein resides in the kinetochore. May be involved in transcriptional regulation. In Mus musculus (Mouse), this protein is Zinc finger protein 276 (Znf276).